The sequence spans 196 residues: Probable malonic semialdehyde reductase RutE (196 aa).

This sequence belongs to the nitroreductase family. HadB/RutE subfamily. The cofactor is FMN.

It carries out the reaction 3-hydroxypropanoate + NADP(+) = 3-oxopropanoate + NADPH + H(+). Functionally, may reduce toxic product malonic semialdehyde to 3-hydroxypropionic acid, which is excreted. The protein is Probable malonic semialdehyde reductase RutE of Enterobacter sp. (strain 638).